A 1279-amino-acid polypeptide reads, in one-letter code: ATP-dependent helicase/nuclease subunit A (1279 aa).

Residues 4–499 (TKWTDEQRQA…VKLFKNFRSR (496 aa)) enclose the UvrD-like helicase ATP-binding domain. 25-32 (AGAGAGKT) provides a ligand contact to ATP. One can recognise a UvrD-like helicase C-terminal domain in the interval 526 to 853 (EEALKVGASY…RIMSIHKSKG (328 aa)).

This sequence belongs to the helicase family. AddA subfamily. In terms of assembly, heterodimer of AddA and AddB/RexB. Requires Mg(2+) as cofactor.

It catalyses the reaction Couples ATP hydrolysis with the unwinding of duplex DNA by translocating in the 3'-5' direction.. The catalysed reaction is ATP + H2O = ADP + phosphate + H(+). Functionally, the heterodimer acts as both an ATP-dependent DNA helicase and an ATP-dependent, dual-direction single-stranded exonuclease. Recognizes the chi site generating a DNA molecule suitable for the initiation of homologous recombination. The AddA nuclease domain is required for chi fragment generation; this subunit has the helicase and 3' -&gt; 5' nuclease activities. This chain is ATP-dependent helicase/nuclease subunit A, found in Clostridium botulinum (strain 657 / Type Ba4).